The primary structure comprises 503 residues: Probable voltage-gated potassium channel subunit kvs-4 (503 aa).

The Cytoplasmic segment spans residues 1–231; the sequence is MNSAIMQGAA…EPASSGKAQA (231 aa). The Required for dendritic localization motif lies at 217–219; it reads WNI. The helical transmembrane segment at 232–252 threads the bilayer; that stretch reads FAVCSVVFVLISISGLVLGSL. At 253 to 275 the chain is on the extracellular side; that stretch reads PELQVATKQRNNLTGEEFTEMEP. N264 carries an N-linked (GlcNAc...) asparagine glycan. The helical transmembrane segment at 276 to 296 threads the bilayer; it reads MPILGYIEYVCIVWFTMEYGL. Topologically, residues 297–313 are cytoplasmic; it reads KMLVSAERSKTFRQLLN. A helical membrane pass occupies residues 314–334; it reads IIDLLAILPFIIEMLLLIFGI. Residues 335 to 346 are Extracellular-facing; sequence STEQLRDLKGAF. A helical; Voltage-sensor membrane pass occupies residues 347-366; sequence LVIRILRVLRVIRVLKLGRY. Over 367 to 383 the chain is Cytoplasmic; it reads SSGLQMFGKTLKASFRQ. Positions 368 to 383 are S4-S5 linker; it reads SGLQMFGKTLKASFRQ. Residues 384–404 form a helical membrane-spanning segment; sequence LGMMAMVVMTGVIFFSTLVYF. The Extracellular portion of the chain corresponds to 405–417; it reads LEKDEPASKFHSI. An intramembrane region (helical) is located at residues 418-429; it reads PAACWWCIVTMT. The stretch at 430 to 434 is an intramembrane region; sequence TVGYG. Positions 430–435 match the Selectivity filter motif; sequence TVGYGD. Over 435–445 the chain is Extracellular; that stretch reads DLTPVTVPGKL. The chain crosses the membrane as a helical span at residues 446–466; that stretch reads VATGAIACGVLVLALPITIIV. Residues 467–503 lie on the Cytoplasmic side of the membrane; the sequence is DNFMKVAETERPAGGNRYRTSQYPKATKSEQMILKVT. The Required for dendritic localization signature appears at 496–500; sequence EQMIL.

It belongs to the potassium channel family. B (Shab) (TC 1.A.1.2) subfamily. Kv2.2/KCNB2 sub-subfamily. Homotetramer or heterotetramer. Interacts with unc-101 (via N-terminus); which targets kvs-4 to dendrites. As to expression, expressed in the cholinergic motor neuron DA9, mechanosensory neurons ALM and PLM, and the interneuron PVPL.

It localises to the cell membrane. It is found in the perikaryon. The protein localises to the cell projection. Its subcellular location is the axon. The protein resides in the dendrite. In terms of biological role, voltage-gated potassium channel that mediates transmembrane potassium transport in excitable membranes. This Caenorhabditis elegans protein is Probable voltage-gated potassium channel subunit kvs-4.